The sequence spans 391 residues: Phosphoglycerate kinase (391 aa).

Substrate is bound by residues 23–25 (DFN), Arg38, 61–64 (HLGK), Arg117, and Arg150. ATP contacts are provided by residues Lys201, Gly291, Glu322, and 348-351 (GGDS).

The protein belongs to the phosphoglycerate kinase family. As to quaternary structure, monomer.

Its subcellular location is the cytoplasm. The enzyme catalyses (2R)-3-phosphoglycerate + ATP = (2R)-3-phospho-glyceroyl phosphate + ADP. It functions in the pathway carbohydrate degradation; glycolysis; pyruvate from D-glyceraldehyde 3-phosphate: step 2/5. The polypeptide is Phosphoglycerate kinase (Clostridium beijerinckii (strain ATCC 51743 / NCIMB 8052) (Clostridium acetobutylicum)).